A 172-amino-acid chain; its full sequence is Cold-inducible RNA-binding protein (172 aa).

In terms of domain architecture, RRM spans 6-84 (GKLFVGGLSF…RQIRVDQAGK (79 aa)). Positions 70 to 172 (KSVDGRQIRV…SYDSYATHNE (103 aa)) are disordered. Gly residues-rich tracts occupy residues 93-105 (YRGG…GFFR) and 114-137 (FSRG…GYGG). A phosphoserine mark is found at S130, S138, S146, S156, S159, and S163. The segment covering 138–172 (SRDYYASRSQGGSYGYRSSGGSYRDSYDSYATHNE) has biased composition (low complexity).

As to quaternary structure, interacts with EIF4G1. Associates with ribosomes. Methylated on arginine residues. Methylation of the RGG motifs is a prerequisite for recruitment into SGs. Post-translationally, phosphorylated by CK2, GSK3A and GSK3B. Phosphorylation by GSK3B increases RNA-binding activity to the TXN 3'-UTR transcript upon exposure to UV radiation. In terms of tissue distribution, ubiquitous.

It localises to the nucleus. It is found in the nucleoplasm. Its subcellular location is the cytoplasm. Functionally, cold-inducible mRNA binding protein that plays a protective role in the genotoxic stress response by stabilizing transcripts of genes involved in cell survival. Promotes assembly of stress granules (SGs), when overexpressed. Seems to play an essential role in cold-induced suppression of cell proliferation. Acts as a translational repressor. Acts as a translational activator. Binds specifically to the 3'-untranslated regions (3'-UTRs) of stress-responsive transcripts RPA2 and TXN. The chain is Cold-inducible RNA-binding protein (Cirbp) from Mus musculus (Mouse).